We begin with the raw amino-acid sequence, 307 residues long: MAKVVAIVGPTAVGKTALSLRVAQKFGGEVISGDSMQVYRGLDIGTAKATTEERSLVPHHLIDVKDIHDRFSVADFKVAAEREIDQITDRGHLPLVVGGTGFYLQALVENLALGRDQFDQESAAIRDHWHQIATERGKQFVWEQLNERDPAAAAKIPVANLRRVIRALEVIEKTGALFSTQPQPPAKNDFLIIGLTTQRPVLYQRINQRVDQMVANGLLEEAKWLYDQGGENEQAGKGIGYRELFPHFAGTVSRQEALEKIKLDSRHYAKRQLTWFRNQMTVHWFDLVSQQNTTEEIEALINGWLKK.

An ATP-binding site is contributed by 9-16; the sequence is GPTAVGKT. Residue 11–16 coordinates substrate; that stretch reads TAVGKT. An interaction with substrate tRNA region spans residues 34–37; sequence DSMQ.

The protein belongs to the IPP transferase family. In terms of assembly, monomer. The cofactor is Mg(2+).

The enzyme catalyses adenosine(37) in tRNA + dimethylallyl diphosphate = N(6)-dimethylallyladenosine(37) in tRNA + diphosphate. Functionally, catalyzes the transfer of a dimethylallyl group onto the adenine at position 37 in tRNAs that read codons beginning with uridine, leading to the formation of N6-(dimethylallyl)adenosine (i(6)A). This Limosilactobacillus fermentum (strain NBRC 3956 / LMG 18251) (Lactobacillus fermentum) protein is tRNA dimethylallyltransferase.